A 337-amino-acid polypeptide reads, in one-letter code: Peptide methionine sulfoxide reductase MsrA/MsrB (337 aa).

Positions 28 to 181 are peptide methionine sulfoxide reductase A; sequence KDIYLAGGCF…PGGYCHVDLS (154 aa). Cys-36 is a catalytic residue. The MsrB domain occupies 198 to 321; that stretch reads KDELKAKLSD…NGASLKFIPL (124 aa). Cys-310 (nucleophile) is an active-site residue.

It in the N-terminal section; belongs to the MsrA Met sulfoxide reductase family. In the C-terminal section; belongs to the MsrB Met sulfoxide reductase family.

It catalyses the reaction L-methionyl-[protein] + [thioredoxin]-disulfide + H2O = L-methionyl-(S)-S-oxide-[protein] + [thioredoxin]-dithiol. It carries out the reaction [thioredoxin]-disulfide + L-methionine + H2O = L-methionine (S)-S-oxide + [thioredoxin]-dithiol. The catalysed reaction is L-methionyl-[protein] + [thioredoxin]-disulfide + H2O = L-methionyl-(R)-S-oxide-[protein] + [thioredoxin]-dithiol. Functionally, has an important function as a repair enzyme for proteins that have been inactivated by oxidation. Catalyzes the reversible oxidation-reduction of methionine sulfoxide in proteins to methionine. This chain is Peptide methionine sulfoxide reductase MsrA/MsrB (msrAB), found in Campylobacter fetus.